A 101-amino-acid chain; its full sequence is UPF0235 protein SG2030 (101 aa).

It belongs to the UPF0235 family.

In Sodalis glossinidius (strain morsitans), this protein is UPF0235 protein SG2030.